Consider the following 261-residue polypeptide: Shikimate dehydrogenase (NADP(+)) (261 aa).

Shikimate is bound by residues 13–15 (SLS) and T60. K64 functions as the Proton acceptor in the catalytic mechanism. Positions 85 and 100 each coordinate shikimate. Residues 121-125 (GAGGA) and I202 each bind NADP(+). Y204 serves as a coordination point for shikimate. G225 lines the NADP(+) pocket.

It belongs to the shikimate dehydrogenase family. As to quaternary structure, homodimer.

It catalyses the reaction shikimate + NADP(+) = 3-dehydroshikimate + NADPH + H(+). Its pathway is metabolic intermediate biosynthesis; chorismate biosynthesis; chorismate from D-erythrose 4-phosphate and phosphoenolpyruvate: step 4/7. Its function is as follows. Involved in the biosynthesis of the chorismate, which leads to the biosynthesis of aromatic amino acids. Catalyzes the reversible NADPH linked reduction of 3-dehydroshikimate (DHSA) to yield shikimate (SA). The chain is Shikimate dehydrogenase (NADP(+)) from Exiguobacterium sibiricum (strain DSM 17290 / CCUG 55495 / CIP 109462 / JCM 13490 / 255-15).